The following is a 647-amino-acid chain: Protein cueball (647 aa).

An N-terminal signal peptide occupies residues 1 to 22 (MLWCPSVLVPLIAVAACLPVLA). Residues 23–534 (IGTPLEWEFA…CMTPSPWTSN (512 aa)) lie on the Extracellular side of the membrane. 2 N-linked (GlcNAc...) asparagine glycosylation sites follow: Asn-80 and Asn-106. LDL-receptor class B repeat units lie at residues 119-166 (RNLF…DVCR), 167-211 (RKLY…DQLS), and 212-257 (DRIF…TNDA). The N-linked (GlcNAc...) asparagine glycan is linked to Asn-175. Asn-316 is a glycosylation site (N-linked (GlcNAc...) asparagine). EGF-like domains follow at residues 365–401 (DEKT…SRCE) and 436–473 (EISK…ERCE). 5 disulfide bridges follow: Cys-376–Cys-389, Cys-391–Cys-400, Cys-440–Cys-450, Cys-444–Cys-461, and Cys-463–Cys-472. Residue Asn-475 is glycosylated (N-linked (GlcNAc...) asparagine). The helical transmembrane segment at 535–555 (VIIVLVLGIVSCFFLVAVIVH) threads the bilayer. Residues 556–647 (GFRRLYKPKR…LIHNMDDDLY (92 aa)) lie on the Cytoplasmic side of the membrane.

This sequence belongs to the cueball family.

It is found in the cell membrane. Its function is as follows. Has a role in spermatogenesis and oogenesis. The polypeptide is Protein cueball (Drosophila pseudoobscura pseudoobscura (Fruit fly)).